We begin with the raw amino-acid sequence, 686 residues long: Acyl-CoA synthetase short-chain family member 3, mitochondrial (686 aa).

The transit peptide at 1–29 (MKPSWLQCRKVTSAGGLGGPLPGSSPARG) directs the protein to the mitochondrion. CoA is bound at residue 227 to 230 (EPGR). ATP contacts are provided by residues 425–427 (GER) and 446–451 (DHWWQT). Lysine 518 carries the post-translational modification N6-succinyllysine. The residue at position 524 (lysine 524) is an N6-acetyllysine. The ATP site is built by aspartate 539, arginine 554, and arginine 565. Arginine 624 serves as a coordination point for CoA.

Belongs to the ATP-dependent AMP-binding enzyme family.

Its subcellular location is the mitochondrion matrix. The catalysed reaction is acetate + ATP + CoA = acetyl-CoA + AMP + diphosphate. It carries out the reaction propanoate + ATP + CoA = propanoyl-CoA + AMP + diphosphate. The enzyme catalyses butanoate + ATP + CoA = butanoyl-CoA + AMP + diphosphate. Its function is as follows. Catalyzes the synthesis of acetyl-CoA from short-chain fatty acids. Propionate is the preferred substrate. Can utilize acetate and butyrate with a much lower affinity. This chain is Acyl-CoA synthetase short-chain family member 3, mitochondrial (ACSS3), found in Homo sapiens (Human).